Here is a 684-residue protein sequence, read N- to C-terminus: Glycine--tRNA ligase beta subunit (684 aa).

It belongs to the class-II aminoacyl-tRNA synthetase family. Tetramer of two alpha and two beta subunits.

Its subcellular location is the cytoplasm. The enzyme catalyses tRNA(Gly) + glycine + ATP = glycyl-tRNA(Gly) + AMP + diphosphate. The protein is Glycine--tRNA ligase beta subunit of Pseudomonas aeruginosa (strain LESB58).